A 622-amino-acid chain; its full sequence is Chromosomal replication initiator protein DnaA (622 aa).

The segment at Met1–Ala99 is domain I, interacts with DnaA modulators. The segment at Asp88–Arg282 is disordered. A domain II region spans residues Pro100–Ala281. 2 stretches are compositionally biased toward basic and acidic residues: residues Gln118–Asp137 and Gly176–Arg210. The segment covering Pro250–Val262 has biased composition (gly residues). The tract at residues Arg282–Ala498 is domain III, AAA+ region. Residues Gly326, Gly328, Lys329, and Thr330 each coordinate ATP. The interval Ser499–Gly622 is domain IV, binds dsDNA.

It belongs to the DnaA family. In terms of assembly, oligomerizes as a right-handed, spiral filament on DNA at oriC.

Its subcellular location is the cytoplasm. Functionally, plays an essential role in the initiation and regulation of chromosomal replication. ATP-DnaA binds to the origin of replication (oriC) to initiate formation of the DNA replication initiation complex once per cell cycle. Binds the DnaA box (a 9 base pair repeat at the origin) and separates the double-stranded (ds)DNA. Forms a right-handed helical filament on oriC DNA; dsDNA binds to the exterior of the filament while single-stranded (ss)DNA is stabiized in the filament's interior. The ATP-DnaA-oriC complex binds and stabilizes one strand of the AT-rich DNA unwinding element (DUE), permitting loading of DNA polymerase. After initiation quickly degrades to an ADP-DnaA complex that is not apt for DNA replication. Binds acidic phospholipids. The protein is Chromosomal replication initiator protein DnaA of Streptomyces griseus subsp. griseus (strain JCM 4626 / CBS 651.72 / NBRC 13350 / KCC S-0626 / ISP 5235).